Consider the following 685-residue polypeptide: MTRLYQPSQDWPACTLSYRHFHLLWTLPLCAVLFLVARPFLTKLDRAKLILLPIIAFVWTTPWDNLIVKNRAWFYHRHCIWFTIGYVPIEEYFFFVIQSLISTLWCTLLTRWALPNLYLVPSSPKRRRLATPAVVVCMLCFVLGLKAAVPETHSYYFGMITWWSSLPLALLLWGSVDFVSNMGVRAGLAPFALSVLAPTFYLWASDVYALRRGTWHINEATSLNVFPIPHLPIEEMLFFLVTNLILVSACFTFDRCVAICRQSVAENAPPLSPSYLPLGSLDTYTKLWAAFVRSDRPPVATSAASASVEPRDLAASLQVLRAASKSFNAASLLLPWDLRTDLGCLYAFCRVADDLVDDDAQGLEAKSSNLDVIRAIVDAIYADSPEAAPQKQPSAQPVSDRIRTLLAPVALPDKVKQDTRAAAASIAPLTRYIPKRLWYEMLQGYSLDLLFEHPDADKRTRLRTMDDLVEYSQCVAGVVGEMCTRVILGRCGGAVPLELKVDRTIAVPSTKAAMAGKALDLTRADDVHALLYEARRMGVSLQLVNIARDIVPDSVELRRCYLPTDMFDKQDARMQDALLAGHIAVRSQHTTTLEEKELVQPRDVRKYALRLLRVSRGLYDQAYPALAQIPNRPARAGLKAACSVYAAIGTRIEAQTETDVAEGRRARMSNRDRMLRAVSAVYFGV.

Positions Thr15–Arg255 are lycopene beta-cyclase. Helical transmembrane passes span Phe21–Leu41, Lys48–Val68, Tyr92–Leu114, Leu129–Val149, Tyr156–Val176, Gly187–Val207, and Leu231–Phe251. The phytoene synthase stretch occupies residues Gln262–Val685.

In the N-terminal section; belongs to the lycopene beta-cyclase family. It in the C-terminal section; belongs to the phytoene/squalene synthase family.

It is found in the membrane. The catalysed reaction is all-trans-lycopene = gamma-carotene. It catalyses the reaction gamma-carotene = all-trans-beta-carotene. The enzyme catalyses 2 (2E,6E,10E)-geranylgeranyl diphosphate = 15-cis-phytoene + 2 diphosphate. The protein operates within carotenoid biosynthesis; beta-carotene biosynthesis. Its pathway is carotenoid biosynthesis; phytoene biosynthesis; all-trans-phytoene from geranylgeranyl diphosphate: step 1/1. In terms of biological role, bifunctional enzyme that catalyzes the reactions from geranylgeranyl diphosphate to phytoene (phytoene synthase) and lycopene to beta-carotene via the intermediate gamma-carotene (lycopene cyclase). The polypeptide is Bifunctional lycopene cyclase/phytoene synthase (Sporisorium reilianum (strain SRZ2) (Maize head smut fungus)).